A 1881-amino-acid polypeptide reads, in one-letter code: Genome polyprotein (1881 aa).

The span at 1–16 (MAQTLSKISNKENASS) shows a compositional bias: polar residues. The tract at residues 1 to 93 (MAQTLSKISN…SHLKPASTDV (93 aa)) is disordered. Residues 37–50 (EPLDHDSRRGRDPV) show a composition bias toward basic and acidic residues. Residues 564–720 (DKVISCCTRR…DKWKSDNPGK (157 aa)) form the SF3 helicase domain. Residue 590 to 597 (GPPGCGKT) participates in ATP binding. The residue at position 1093 (Y1093) is an O-(5'-phospho-RNA)-tyrosine. Residues 1188–1341 (GVTHKNAIVS…KLIVPYVKVD (154 aa)) form the Peptidase C24 domain. Catalysis depends on for 3CLpro activity residues H1222, E1243, and C1305. The RdRp catalytic domain maps to 1593–1718 (HDRYCVDYSK…IVPPLISSVM (126 aa)).

As to quaternary structure, homodimer. Interacts with NTPase, protein p30 and protease-polymerase p76. Interacts with capsid protein VP1 and protease-polymerase p76. Interacts with host IEF4e; this interaction plays a role in translation of viral proteins. In terms of assembly, homooligomer. Interacts with Vpg, protein p32 and may interact with capsid protein VP1. Specific enzymatic cleavages in vivo yield mature proteins. Pro-Pol is first autocatalytically cleaved, then processes the whole polyprotein. In terms of processing, VPg is uridylylated by the polymerase and is covalently attached to the 5'-end of the polyadenylated genomic and subgenomic RNAs. This uridylylated form acts as a nucleotide-peptide primer for the polymerase.

The protein localises to the host endoplasmic reticulum membrane. The enzyme catalyses a ribonucleoside 5'-triphosphate + H2O = a ribonucleoside 5'-diphosphate + phosphate + H(+). It catalyses the reaction RNA(n) + a ribonucleoside 5'-triphosphate = RNA(n+1) + diphosphate. It carries out the reaction Endopeptidase with a preference for cleavage when the P1 position is occupied by Glu-|-Xaa and the P1' position is occupied by Gly-|-Yaa.. Functionally, together with NTPase and NS4, initiates the formation of the replication complex. Induces the proliferation of the host smooth ER membranes forming long tubular structures. These remodeled membranes probably form the viral factories that contain the replication complex. In terms of biological role, displays NTPase activity, but no helicase activity. Induces the formation of convoluted membranes derived from the host ER. These remodeled membranes probably form the viral factories that contain the replication complex. Together with NS2 and NS4, initiates the formation of the replication complex. Probable key protein responsible for the formation of membrane alterations by the virus. Induces the formation of convoluted membranes derived from the host ER. These remodeled membranes probably form the viral factories that contain the replication complex. Together with NS2 and NTPase, initiates the formation of the replication complex. Its function is as follows. Viral genome-linked protein is covalently linked to the 5'-end of the positive-strand, negative-strand genomic RNAs and subgenomic RNA. Acts as a genome-linked replication primer. May recruit ribosome to viral RNA thereby promoting viral proteins translation. Interacts with host translation initiation complex to allow the translation of viral proteins. Functionally, protease-polymerase p76 processes the polyprotein: Pro-Pol is first released by autocleavage, then all other proteins are cleaved. Cleaves host translation initiation factor eIF4G1, eIF4G2 and PABP1 thereby inducing a shutdown of host protein synthesis. This shutdown may not prevent viral mRNA from being translated since viral Vpg replaces the cap. Also functions as an RNA-directed RNA polymerase, which replicates genomic and antigenomic viral RNA by recognizing specific signals. Also transcribes a subgenomic mRNA by initiating RNA synthesis internally on antigenomic RNA. This sgRNA codes for structural proteins. Catalyzes the covalent attachment VPg with viral RNAs. This Vesicular exanthema of swine virus serotype A48 (isolate Swine/United States/A48/1948) (VESV) protein is Genome polyprotein.